Reading from the N-terminus, the 548-residue chain is ATP synthase subunit alpha (548 aa).

Residue 172–179 (GDRKTGKT) coordinates ATP.

It belongs to the ATPase alpha/beta chains family. As to quaternary structure, F-type ATPases have 2 components, CF(1) - the catalytic core - and CF(0) - the membrane proton channel. CF(1) has five subunits: alpha(3), beta(3), gamma(1), delta(1), epsilon(1). CF(0) has three main subunits: a(1), b(2) and c(9-12). The alpha and beta chains form an alternating ring which encloses part of the gamma chain. CF(1) is attached to CF(0) by a central stalk formed by the gamma and epsilon chains, while a peripheral stalk is formed by the delta and b chains.

The protein localises to the cell membrane. It carries out the reaction ATP + H2O + 4 H(+)(in) = ADP + phosphate + 5 H(+)(out). Functionally, produces ATP from ADP in the presence of a proton gradient across the membrane. The alpha chain is a regulatory subunit. The chain is ATP synthase subunit alpha from Mycobacteroides abscessus (strain ATCC 19977 / DSM 44196 / CCUG 20993 / CIP 104536 / JCM 13569 / NCTC 13031 / TMC 1543 / L948) (Mycobacterium abscessus).